Consider the following 348-residue polypeptide: Phosphate acyltransferase (348 aa).

This sequence belongs to the PlsX family. Homodimer. Probably interacts with PlsY.

The protein localises to the cytoplasm. The enzyme catalyses a fatty acyl-[ACP] + phosphate = an acyl phosphate + holo-[ACP]. It functions in the pathway lipid metabolism; phospholipid metabolism. Functionally, catalyzes the reversible formation of acyl-phosphate (acyl-PO(4)) from acyl-[acyl-carrier-protein] (acyl-ACP). This enzyme utilizes acyl-ACP as fatty acyl donor, but not acyl-CoA. The chain is Phosphate acyltransferase from Leuconostoc citreum (strain KM20).